We begin with the raw amino-acid sequence, 737 residues long: Ribosome-releasing factor 2, mitochondrial (737 aa).

The N-terminal 29 residues, 1 to 29 (MLKYALHSGGMPRNRLLRQLSAHIFRRSY), are a transit peptide targeting the mitochondrion. Residues 31-310 (SNIRNIGILA…AVNTYLPAPE (280 aa)) form the tr-type G domain. GTP-binding positions include 40–47 (AHIDAGKT), 104–108 (DTPGH), and 158–161 (NKMD).

The protein belongs to the TRAFAC class translation factor GTPase superfamily. Classic translation factor GTPase family. EF-G/EF-2 subfamily.

The protein localises to the mitochondrion. Its function is as follows. Mitochondrial GTPase that mediates the disassembly of ribosomes from messenger RNA at the termination of mitochondrial protein biosynthesis. Not involved in the GTP-dependent ribosomal translocation step during translation elongation. The polypeptide is Ribosome-releasing factor 2, mitochondrial (Drosophila pseudoobscura pseudoobscura (Fruit fly)).